The sequence spans 217 residues: MSGLSESAKLVKDALERRGLETPMQPNLATPAEKKEKIEQHMREILNLLGLDLTDDSLEETPQRIAKMYVDEIFSGLDYANFPKITVIENKMKVSEMVKVKDITLTSTCEHHLVTIDGTAAVAYIPRGKIIGLSKINRIVRFFAQRPQVQERMTQQILVALQTLLESDDVAVTIDATHYCVKSRGVMDATSVTTTTALGGIFKSNPATRAEFLHGLR.

Residues Cys-109, His-112, and Cys-180 each coordinate Zn(2+).

The protein belongs to the GTP cyclohydrolase I family. As to quaternary structure, toroid-shaped homodecamer, composed of two pentamers of five dimers.

It carries out the reaction GTP + H2O = 7,8-dihydroneopterin 3'-triphosphate + formate + H(+). The protein operates within cofactor biosynthesis; 7,8-dihydroneopterin triphosphate biosynthesis; 7,8-dihydroneopterin triphosphate from GTP: step 1/1. The polypeptide is GTP cyclohydrolase 1 (Vibrio cholerae serotype O1 (strain ATCC 39315 / El Tor Inaba N16961)).